The primary structure comprises 579 residues: Basic helix-loop-helix ARNT-like protein 2 (579 aa).

An interaction with PER2 region spans residues 1–198; that stretch reads MEFPRKRRGR…SPREKPIDTK (198 aa). Positions 4–9 match the Nuclear localization signal motif; that stretch reads PRKRRG. Residues 40-61 form a disordered region; it reads RTGVSAPSGIREAHSQMEKRRR. In terms of domain architecture, bHLH spans 48–101; it reads GIREAHSQMEKRRRDKMNHLIQKLSSMIPPHIPTAHKLDKLSVLRRAVQYLRSL. Residues 50 to 59 are compositionally biased toward basic and acidic residues; it reads REAHSQMEKR. The Nuclear export signal 1 motif lies at 118-128; the sequence is IQDKELSHLIL. Residues 119-190 enclose the PAS 1 domain; it reads QDKELSHLIL…KEQLSCDGSP (72 aa). A compositionally biased stretch (basic and acidic residues) spans 186 to 196; sequence CDGSPREKPID. Positions 186–213 are disordered; that stretch reads CDGSPREKPIDTKTSQVYSHPYTGRPRM. A Glycyl lysine isopeptide (Lys-Gly) (interchain with G-Cter in SUMO2 and SUMO3) cross-link involves residue lysine 226. Residue lysine 233 forms a Glycyl lysine isopeptide (Lys-Gly) (interchain with G-Cter in SUMO2) linkage. Residues 296 to 366 enclose the PAS 2 domain; sequence VPQKSGKINV…DKHKAVLQSK (71 aa). The short motif at 331–339 is the Nuclear export signal 2 element; it reads LGYLPQELL. The 44-residue stretch at 371-414 folds into the PAC domain; it reads TDSYKFRVKDGAFVTLKSEWFSFTNPWTKELEYIVSVNTLVLGR. The tract at residues 469–536 is disordered; that stretch reads RLHSSSPEDA…AHPHGPLPGD (68 aa).

As to quaternary structure, component of the circadian core oscillator, which includes the CRY proteins, CLOCK, or NPAS2, BMAL1 or BMAL2, CSNK1D and/or CSNK1E, TIMELESS and the PER proteins. Interacts directly with CLOCK to form the BMAL2-CLOCK transactivator. Can form heterodimers or homodimers which interact directly with CLOCK to form the transcription activator. Interacts with NPAS2 and HIF1A. Interacts with PER2. As to expression, expressed in the suprachiasmatic nucleus (SCN).

The protein resides in the nucleus. Its function is as follows. Transcriptional activator which forms a core component of the circadian clock. The circadian clock, an internal time-keeping system, regulates various physiological processes through the generation of approximately 24 hour circadian rhythms in gene expression, which are translated into rhythms in metabolism and behavior. It is derived from the Latin roots 'circa' (about) and 'diem' (day) and acts as an important regulator of a wide array of physiological functions including metabolism, sleep, body temperature, blood pressure, endocrine, immune, cardiovascular, and renal function. Consists of two major components: the central clock, residing in the suprachiasmatic nucleus (SCN) of the brain, and the peripheral clocks that are present in nearly every tissue and organ system. Both the central and peripheral clocks can be reset by environmental cues, also known as Zeitgebers (German for 'timegivers'). The predominant Zeitgeber for the central clock is light, which is sensed by retina and signals directly to the SCN. The central clock entrains the peripheral clocks through neuronal and hormonal signals, body temperature and feeding-related cues, aligning all clocks with the external light/dark cycle. Circadian rhythms allow an organism to achieve temporal homeostasis with its environment at the molecular level by regulating gene expression to create a peak of protein expression once every 24 hours to control when a particular physiological process is most active with respect to the solar day. Transcription and translation of core clock components (CLOCK, NPAS2, BMAL1, BMAL2, PER1, PER2, PER3, CRY1 and CRY2) plays a critical role in rhythm generation, whereas delays imposed by post-translational modifications (PTMs) are important for determining the period (tau) of the rhythms (tau refers to the period of a rhythm and is the length, in time, of one complete cycle). A diurnal rhythm is synchronized with the day/night cycle, while the ultradian and infradian rhythms have a period shorter and longer than 24 hours, respectively. Disruptions in the circadian rhythms contribute to the pathology of cardiovascular diseases, cancer, metabolic syndromes and aging. A transcription/translation feedback loop (TTFL) forms the core of the molecular circadian clock mechanism. Transcription factors, CLOCK or NPAS2 and BMAL1 or BMAL2, form the positive limb of the feedback loop, act in the form of a heterodimer and activate the transcription of core clock genes and clock-controlled genes (involved in key metabolic processes), harboring E-box elements (5'-CACGTG-3') within their promoters. The core clock genes: PER1/2/3 and CRY1/2 which are transcriptional repressors form the negative limb of the feedback loop and interact with the CLOCK|NPAS2-BMAL1|BMAL2 heterodimer inhibiting its activity and thereby negatively regulating their own expression. This heterodimer also activates nuclear receptors NR1D1/2 and RORA/B/G, which form a second feedback loop and which activate and repress BMAL1 transcription, respectively. The CLOCK-BMAL2 heterodimer activates the transcription of SERPINE1/PAI1 and BHLHE40/DEC1. The chain is Basic helix-loop-helix ARNT-like protein 2 (Bmal2) from Mus musculus (Mouse).